Consider the following 370-residue polypeptide: Phosphoserine aminotransferase (370 aa).

Arg-38 contributes to the L-glutamate binding site. Positions 101, 143, 166, and 189 each coordinate pyridoxal 5'-phosphate. Position 190 is an N6-(pyridoxal phosphate)lysine (Lys-190). 243-244 (NT) lines the pyridoxal 5'-phosphate pocket.

The protein belongs to the class-V pyridoxal-phosphate-dependent aminotransferase family. SerC subfamily. Homodimer. It depends on pyridoxal 5'-phosphate as a cofactor.

The protein localises to the cytoplasm. It carries out the reaction O-phospho-L-serine + 2-oxoglutarate = 3-phosphooxypyruvate + L-glutamate. The enzyme catalyses 4-(phosphooxy)-L-threonine + 2-oxoglutarate = (R)-3-hydroxy-2-oxo-4-phosphooxybutanoate + L-glutamate. Its pathway is amino-acid biosynthesis; L-serine biosynthesis; L-serine from 3-phospho-D-glycerate: step 2/3. It participates in cofactor biosynthesis; pyridoxine 5'-phosphate biosynthesis; pyridoxine 5'-phosphate from D-erythrose 4-phosphate: step 3/5. In terms of biological role, catalyzes the reversible conversion of 3-phosphohydroxypyruvate to phosphoserine and of 3-hydroxy-2-oxo-4-phosphonooxybutanoate to phosphohydroxythreonine. The sequence is that of Phosphoserine aminotransferase from Methanosarcina mazei (strain ATCC BAA-159 / DSM 3647 / Goe1 / Go1 / JCM 11833 / OCM 88) (Methanosarcina frisia).